A 327-amino-acid polypeptide reads, in one-letter code: Nucleotide-binding protein Mflv_3714 (327 aa).

Positions 1-22 (MTRQGMRDDLRGEADSVVHDGT) are enriched in basic and acidic residues. A disordered region spans residues 1-29 (MTRQGMRDDLRGEADSVVHDGTDDIDNEN). 50-57 (GLSGAGRG) is an ATP binding site. 101 to 104 (DVRS) lines the GTP pocket.

This sequence belongs to the RapZ-like family.

Functionally, displays ATPase and GTPase activities. The protein is Nucleotide-binding protein Mflv_3714 of Mycolicibacterium gilvum (strain PYR-GCK) (Mycobacterium gilvum (strain PYR-GCK)).